We begin with the raw amino-acid sequence, 154 residues long: Interleukin-2 (154 aa).

A signal peptide spans 1–20 (MYKMQLLSCIALTLALVANG). The O-linked (GalNAc...) threonine glycan is linked to Thr-23. Residues Cys-78 and Cys-126 are joined by a disulfide bond.

The protein belongs to the IL-2 family.

The protein localises to the secreted. Cytokine produced by activated CD4-positive helper T-cells and to a lesser extend activated CD8-positive T-cells and natural killer (NK) cells that plays pivotal roles in the immune response and tolerance. Binds to a receptor complex composed of either the high-affinity trimeric IL-2R (IL2RA/CD25, IL2RB/CD122 and IL2RG/CD132) or the low-affinity dimeric IL-2R (IL2RB and IL2RG). Interaction with the receptor leads to oligomerization and conformation changes in the IL-2R subunits resulting in downstream signaling starting with phosphorylation of JAK1 and JAK3. In turn, JAK1 and JAK3 phosphorylate the receptor to form a docking site leading to the phosphorylation of several substrates including STAT5. This process leads to activation of several pathways including STAT, phosphoinositide-3-kinase/PI3K and mitogen-activated protein kinase/MAPK pathways. Functions as a T-cell growth factor and can increase NK-cell cytolytic activity as well. Promotes strong proliferation of activated B-cells and subsequently immunoglobulin production. Plays a pivotal role in regulating the adaptive immune system by controlling the survival and proliferation of regulatory T-cells, which are required for the maintenance of immune tolerance. Moreover, participates in the differentiation and homeostasis of effector T-cell subsets, including Th1, Th2, Th17 as well as memory CD8-positive T-cells. The chain is Interleukin-2 (IL2) from Delphinapterus leucas (Beluga whale).